Here is a 252-residue protein sequence, read N- to C-terminus: 4-hydroxy-tetrahydrodipicolinate reductase (252 aa).

8–13 (GALGRM) serves as a coordination point for NAD(+). NADP(+) is bound at residue Arg-36. NAD(+)-binding positions include 89-91 (GTT) and 114-117 (SSNF). His-146 serves as the catalytic Proton donor/acceptor. (S)-2,3,4,5-tetrahydrodipicolinate is bound at residue His-147. Lys-150 serves as the catalytic Proton donor. Residue 156 to 157 (GT) participates in (S)-2,3,4,5-tetrahydrodipicolinate binding.

The protein belongs to the DapB family.

The protein resides in the cytoplasm. The catalysed reaction is (S)-2,3,4,5-tetrahydrodipicolinate + NAD(+) + H2O = (2S,4S)-4-hydroxy-2,3,4,5-tetrahydrodipicolinate + NADH + H(+). The enzyme catalyses (S)-2,3,4,5-tetrahydrodipicolinate + NADP(+) + H2O = (2S,4S)-4-hydroxy-2,3,4,5-tetrahydrodipicolinate + NADPH + H(+). The protein operates within amino-acid biosynthesis; L-lysine biosynthesis via DAP pathway; (S)-tetrahydrodipicolinate from L-aspartate: step 4/4. Catalyzes the conversion of 4-hydroxy-tetrahydrodipicolinate (HTPA) to tetrahydrodipicolinate. This Methanoculleus marisnigri (strain ATCC 35101 / DSM 1498 / JR1) protein is 4-hydroxy-tetrahydrodipicolinate reductase.